A 160-amino-acid polypeptide reads, in one-letter code: S-ribosylhomocysteine lyase (160 aa).

Fe cation is bound by residues His57, His61, and Cys127.

It belongs to the LuxS family. As to quaternary structure, homodimer. Fe cation is required as a cofactor.

It carries out the reaction S-(5-deoxy-D-ribos-5-yl)-L-homocysteine = (S)-4,5-dihydroxypentane-2,3-dione + L-homocysteine. Functionally, involved in the synthesis of autoinducer 2 (AI-2) which is secreted by bacteria and is used to communicate both the cell density and the metabolic potential of the environment. The regulation of gene expression in response to changes in cell density is called quorum sensing. Catalyzes the transformation of S-ribosylhomocysteine (RHC) to homocysteine (HC) and 4,5-dihydroxy-2,3-pentadione (DPD). This is S-ribosylhomocysteine lyase from Streptococcus suis (strain 98HAH33).